The following is a 373-amino-acid chain: uncharacterized protein (373 aa).

A helical transmembrane segment spans residues 180–202; the sequence is YYVVALGTLALGSILGYTAKYVW.

It is found in the membrane. This is an uncharacterized protein from Rickettsia prowazekii (strain Madrid E).